The sequence spans 546 residues: MVGEEKMSLRNRLSKSGENPEQDEAQRSVSDTQSNGRITMKQLIAKKRQLAAEAEELKPLFLKEVGCHFDDFVTNLIEKSASLDNGGCALTTFSILEEMKNNHRAKDLRAPPEKGKIFISRRSLLDELFEVDHIRTIYHMFIGLLILFILSTLVVDYIDEGRLVLEFNLLGYAFGKLPTVIWTWWAMFLSTLSIPYFLFQRWAHGYSKTSHPLIYSLSHGFFFLVFQLGILGFVPTYVVLAYTLPPASRFIVILEQIRMVMKAHSFVRENVPRVLNAAKEKSSTVPVPTVNQYLYFLFAPTLIYRDSYPRTPTVRWGYVAVQFLQVFGCLFYVYYIFERLCAPLFRNIKQEPFSARVLVLCVFNSILPGVLMLFLTFFAFLHCWLNAFAEMLRFGDRMFYKDWWNSTSYSNYYRTWNVVVHDWLYYYAYKDLLWFFSKRFKSAAMLAVFALSAVVHEYALAVCLSYFYPVLFVLFMFFGMAFNFIVNDSRKRPIWNIMVWASLFLGHGVILCFYSQEWYARQHCPLKNPTFLDYVRPRSWTCQYVF.

Position 1 is an N-acetylmethionine (M1). The disordered stretch occupies residues 1-37 (MVGEEKMSLRNRLSKSGENPEQDEAQRSVSDTQSNGR). Residues 1–134 (MVGEEKMSLR…LDELFEVDHI (134 aa)) lie on the Cytoplasmic side of the membrane. Phosphoserine is present on S8. Polar residues predominate over residues 27 to 37 (RSVSDTQSNGR). H133 contacts cholesterol. Residues 135–156 (RTIYHMFIGLLILFILSTLVVD) traverse the membrane as a helical segment. At 157–176 (YIDEGRLVLEFNLLGYAFGK) the chain is on the lumenal side. A helical membrane pass occupies residues 177–202 (LPTVIWTWWAMFLSTLSIPYFLFQRW). Over 203–214 (AHGYSKTSHPLI) the chain is Cytoplasmic. The helical transmembrane segment at 215-240 (YSLSHGFFFLVFQLGILGFVPTYVVL) threads the bilayer. At 241–248 (AYTLPPAS) the chain is on the lumenal side. Residues 249–272 (RFIVILEQIRMVMKAHSFVRENVP) form a helical membrane-spanning segment. Over 273 to 315 (RVLNAAKEKSSTVPVPTVNQYLYFLFAPTLIYRDSYPRTPTVR) the chain is Cytoplasmic. A helical transmembrane segment spans residues 316-348 (WGYVAVQFLQVFGCLFYVYYIFERLCAPLFRNI). Residues 349–365 (KQEPFSARVLVLCVFNS) are Lumenal-facing. Residues 366–391 (ILPGVLMLFLTFFAFLHCWLNAFAEM) form a helical membrane-spanning segment. At 392 to 439 (LRFGDRMFYKDWWNSTSYSNYYRTWNVVVHDWLYYYAYKDLLWFFSKR) the chain is on the cytoplasmic side. The short motif at 399–405 (FYKDWWN) is the FYXDWWN motif element. 7 residues coordinate an acyl-CoA: N411, R414, N417, H421, Y429, K441, and S452. A helical transmembrane segment spans residues 440 to 464 (FKSAAMLAVFALSAVVHEYALAVCL). The active site involves H456. The Lumenal segment spans residues 465 to 470 (SYFYPV). Residues 471-486 (LFVLFMFFGMAFNFIV) form a helical membrane-spanning segment. Residues 487 to 492 (NDSRKR) are Cytoplasmic-facing. Residues 493 to 524 (PIWNIMVWASLFLGHGVILCFYSQEWYARQHC) form a helical membrane-spanning segment. The cysteines at positions 524 and 542 are disulfide-linked. The Lumenal segment spans residues 525–546 (PLKNPTFLDYVRPRSWTCQYVF).

Belongs to the membrane-bound acyltransferase family. Sterol o-acyltransferase subfamily. As to quaternary structure, may form homo- or heterodimers. Interacts with UBIAD1.

The protein resides in the endoplasmic reticulum membrane. The catalysed reaction is a sterol + a long-chain fatty acyl-CoA = a long-chain 3-hydroxysterol ester + CoA. The enzyme catalyses cholesterol + an acyl-CoA = a cholesterol ester + CoA. It catalyses the reaction cholesterol + (9Z)-octadecenoyl-CoA = cholesteryl (9Z-octadecenoate) + CoA. It carries out the reaction cholesterol + hexadecanoyl-CoA = cholesteryl hexadecanoate + CoA. The catalysed reaction is octadecanoyl-CoA + cholesterol = cholesteryl octadecanoate + CoA. The enzyme catalyses (9Z,12Z)-octadecadienoyl-CoA + cholesterol = cholesteryl (9Z,12Z)-octadecadienoate + CoA. It catalyses the reaction (5Z,8Z,11Z,14Z)-eicosatetraenoyl-CoA + cholesterol = cholesteryl (5Z,8Z,11Z,14Z)-eicosatetraenoate + CoA. It carries out the reaction (9Z)-hexadecenoyl-CoA + cholesterol = cholesteryl (9Z)-hexadecenoate + CoA. The catalysed reaction is (11Z)-octadecenoyl-CoA + cholesterol = cholesteryl (11Z)-octadecenoate + CoA. The enzyme catalyses (7Z)-octadecenoyl-CoA + cholesterol = cholesteryl (7Z)-octadecenoate + CoA. In terms of biological role, catalyzes the formation of fatty acid-cholesterol esters, which are less soluble in membranes than cholesterol. Plays a role in lipoprotein assembly and dietary cholesterol absorption. Preferentially utilizes oleoyl-CoA ((9Z)-octadecenoyl-CoA) as a substrate: shows a higher activity towards an acyl-CoA substrate with a double bond at the delta-9 position (9Z) than towards saturated acyl-CoA or an unsaturated acyl-CoA with a double bond at the delta-7 (7Z) or delta-11 (11Z) positions. This Cricetulus griseus (Chinese hamster) protein is Sterol O-acyltransferase 1 (SOAT1).